The sequence spans 357 residues: Sulfate/thiosulfate import ATP-binding protein CysA (357 aa).

Residues 3–237 (ITIQNLNKHF…PENAFVTEFL (235 aa)) enclose the ABC transporter domain. 35 to 42 (GPSGCGKT) contributes to the ATP binding site.

The protein belongs to the ABC transporter superfamily. Sulfate/tungstate importer (TC 3.A.1.6) family. As to quaternary structure, the complex is composed of two ATP-binding proteins (CysA), two transmembrane proteins (CysT and CysW) and a solute-binding protein (CysP).

The protein resides in the cell inner membrane. The enzyme catalyses sulfate(out) + ATP + H2O = sulfate(in) + ADP + phosphate + H(+). It catalyses the reaction thiosulfate(out) + ATP + H2O = thiosulfate(in) + ADP + phosphate + H(+). In terms of biological role, part of the ABC transporter complex CysAWTP involved in sulfate/thiosulfate import. Responsible for energy coupling to the transport system. The protein is Sulfate/thiosulfate import ATP-binding protein CysA of Neisseria meningitidis serogroup A / serotype 4A (strain DSM 15465 / Z2491).